A 372-amino-acid chain; its full sequence is Fatty acid conjugase FAC2 B (372 aa).

Transmembrane regions (helical) follow at residues 44-64 (YFLF…SNYI) and 74-94 (IVWP…WMIG). A Histidine box-1 motif is present at residues 95–99 (HECGH). Residues 131–135 (HRNHH) carry the Histidine box-2 motif. The next 3 helical transmembrane spans lie at 166-186 (IGLM…YIMF), 217-237 (VLFS…IVTV), and 240-260 (AMPA…ILFA). Residues 304 to 308 (HVIHH) carry the Histidine box-3 motif.

This sequence belongs to the fatty acid desaturase type 1 family. In terms of tissue distribution, expressed exclusively in the developing seeds. Not detected in leaves.

Its subcellular location is the microsome membrane. The catalysed reaction is a (9Z,12Z)-octadecadienoyl-containing glycerolipid + AH2 + O2 = a (8E,10E,12Z)-octadecatrienoyl-containing glycerolipid + A + 2 H2O. Its pathway is lipid metabolism; polyunsaturated fatty acid biosynthesis. Its function is as follows. Fatty acid conjugase converting 18:2(9Z, 12Z) to calendic acid 18:3(8E, 10E, 12Z). Converts alpha-linolenic acid (18:3(9Z, 12Z, 15Z)) into 18:4(8E, 10E, 12Z, 15Z). Also has weak activity on the mono-unsaturates 16:1(9Z) and 18:1(9Z) producing two conjugated double bonds at delta(8) and delta(10) position. In Calendula officinalis (Pot marigold), this protein is Fatty acid conjugase FAC2 B.